The sequence spans 271 residues: Putative phosphoenolpyruvate synthase regulatory protein (271 aa).

An ADP-binding site is contributed by 151 to 158; it reads GVSRSGKT.

The protein belongs to the pyruvate, phosphate/water dikinase regulatory protein family. PSRP subfamily.

The catalysed reaction is [pyruvate, water dikinase] + ADP = [pyruvate, water dikinase]-phosphate + AMP + H(+). It catalyses the reaction [pyruvate, water dikinase]-phosphate + phosphate + H(+) = [pyruvate, water dikinase] + diphosphate. Its function is as follows. Bifunctional serine/threonine kinase and phosphorylase involved in the regulation of the phosphoenolpyruvate synthase (PEPS) by catalyzing its phosphorylation/dephosphorylation. The protein is Putative phosphoenolpyruvate synthase regulatory protein of Burkholderia cenocepacia (strain ATCC BAA-245 / DSM 16553 / LMG 16656 / NCTC 13227 / J2315 / CF5610) (Burkholderia cepacia (strain J2315)).